Consider the following 203-residue polypeptide: Protein S40-6 (203 aa).

Residues 1-33 form a disordered region; it reads MAKGRKPTTMNRSDRYLGSYTYGDSHGNSVTDE.

It belongs to the senescence regulator S40 family.

It localises to the cytoplasm. In Arabidopsis thaliana (Mouse-ear cress), this protein is Protein S40-6.